A 242-amino-acid polypeptide reads, in one-letter code: 7-cyano-7-deazaguanine synthase (242 aa).

Residues 1-22 (MNSSSNEKNKDLNRKNFSSKTD) form a disordered region. 32-42 (LSGGLDSTTCL) serves as a coordination point for ATP. C212, C221, C224, and C227 together coordinate Zn(2+).

This sequence belongs to the QueC family. Zn(2+) is required as a cofactor.

The enzyme catalyses 7-carboxy-7-deazaguanine + NH4(+) + ATP = 7-cyano-7-deazaguanine + ADP + phosphate + H2O + H(+). Its pathway is purine metabolism; 7-cyano-7-deazaguanine biosynthesis. Functionally, catalyzes the ATP-dependent conversion of 7-carboxy-7-deazaguanine (CDG) to 7-cyano-7-deazaguanine (preQ(0)). The chain is 7-cyano-7-deazaguanine synthase from Leptospira interrogans serogroup Icterohaemorrhagiae serovar copenhageni (strain Fiocruz L1-130).